A 477-amino-acid chain; its full sequence is tRNA-2-methylthio-N(6)-dimethylallyladenosine synthase (477 aa).

Positions 3–120 constitute an MTTase N-terminal domain; it reads KKLFIKTWGC…LPEMINQIKG (118 aa). [4Fe-4S] cluster is bound by residues cysteine 12, cysteine 49, cysteine 83, cysteine 157, cysteine 161, and cysteine 164. The Radical SAM core domain occupies 143-375; the sequence is KAEGPTAFVS…QNRITQQALR (233 aa). Residues 378 to 441 enclose the TRAM domain; the sequence is RNMIDSEQRV…ANSLRGDVLR (64 aa).

The protein belongs to the methylthiotransferase family. MiaB subfamily. In terms of assembly, monomer. [4Fe-4S] cluster serves as cofactor.

The protein resides in the cytoplasm. The catalysed reaction is N(6)-dimethylallyladenosine(37) in tRNA + (sulfur carrier)-SH + AH2 + 2 S-adenosyl-L-methionine = 2-methylsulfanyl-N(6)-dimethylallyladenosine(37) in tRNA + (sulfur carrier)-H + 5'-deoxyadenosine + L-methionine + A + S-adenosyl-L-homocysteine + 2 H(+). In terms of biological role, catalyzes the methylthiolation of N6-(dimethylallyl)adenosine (i(6)A), leading to the formation of 2-methylthio-N6-(dimethylallyl)adenosine (ms(2)i(6)A) at position 37 in tRNAs that read codons beginning with uridine. The polypeptide is tRNA-2-methylthio-N(6)-dimethylallyladenosine synthase (Pseudoalteromonas atlantica (strain T6c / ATCC BAA-1087)).